Here is a 252-residue protein sequence, read N- to C-terminus: Putative teichuronic acid biosynthesis glycosyltransferase TuaG (252 aa).

It belongs to the glycosyltransferase 2 family.

It functions in the pathway cell wall biogenesis; teichuronic acid biosynthesis. This chain is Putative teichuronic acid biosynthesis glycosyltransferase TuaG (tuaG), found in Bacillus subtilis (strain 168).